Consider the following 718-residue polypeptide: Exostosin-2 (718 aa).

Topologically, residues 1-25 (MCASVKSNIRGPALIPRMKTKHRIY) are cytoplasmic. A helical; Signal-anchor for type II membrane protein transmembrane segment spans residues 26-46 (YVTLFSIVLLGLIATGMFQFW). Over 47–718 (PHSIESSSDG…LKSFPNIGSL (672 aa)) the chain is Lumenal. 4 disulfide bridges follow: C85–C90, C96–C151, C286–C300, and C318–C339. A glycan (N-linked (GlcNAc...) asparagine) is linked at N288. 4 residues coordinate UDP: L461, R465, N490, and N517. R465, N490, N517, R522, D538, D539, and D540 together coordinate UDP-N-acetyl-alpha-D-glucosamine. Residues D538 and D539 each coordinate UDP. A Mn(2+)-binding site is contributed by D540. The a protein site is built by Y582 and S584. A disulfide bridge links C626 with C676. UDP-N-acetyl-alpha-D-glucosamine contacts are provided by E627 and D628. N637 is a glycosylation site (N-linked (GlcNAc...) asparagine). Residues K651 and K653 each coordinate a protein. Position 673 (R673) interacts with UDP-N-acetyl-alpha-D-glucosamine.

It belongs to the glycosyltransferase 47 family. In terms of assembly, part of the heparan sulfate polymerase, a dimeric complex composed of EXT1 and EXT2. Could also form homooligomeric complexes. Interacts with NDST1. Interacts with GALNT5. It depends on Mn(2+) as a cofactor. N-glycosylated at Asn-637. In terms of processing, a soluble form is generated by proteolytic processing. As to expression, expressed in heart, brain, spleen, lung, liver, skeletal muscle and testis. Heart shows a high expression.

Its subcellular location is the golgi apparatus membrane. It is found in the golgi apparatus. The protein localises to the cis-Golgi network membrane. It localises to the endoplasmic reticulum membrane. The protein resides in the secreted. It catalyses the reaction 3-O-{[(1-&gt;4)-beta-D-GlcA-(1-&gt;4)-alpha-D-GlcNAc](n)-(1-&gt;4)-beta-D-GlcA-(1-&gt;3)-beta-D-Gal-(1-&gt;3)-beta-D-Gal-(1-&gt;4)-beta-D-Xyl}-L-seryl-[protein] + UDP-N-acetyl-alpha-D-glucosamine = 3-O-{alpha-D-GlcNAc-[(1-&gt;4)-beta-D-GlcA-(1-&gt;4)-alpha-D-GlcNAc](n)-(1-&gt;4)-beta-D-GlcA-(1-&gt;3)-beta-D-Gal-(1-&gt;3)-beta-D-Gal-(1-&gt;4)-beta-D-Xyl}-L-seryl-[protein] + UDP + H(+). It functions in the pathway protein modification; protein glycosylation. Its function is as follows. Glycosyltransferase forming with EXT1 the heterodimeric heparan sulfate polymerase which catalyzes the elongation of the heparan sulfate glycan backbone. Glycan backbone extension consists in the alternating transfer of (1-&gt;4)-beta-D-GlcA and (1-&gt;4)-alpha-D-GlcNAc residues from their respective UDP-sugar donors. Both EXT1 and EXT2 are required for the full activity of the polymerase since EXT1 bears the N-acetylglucosaminyl-proteoglycan 4-beta-glucuronosyltransferase activity within the complex while EXT2 carries the glucuronosyl-N-acetylglucosaminyl-proteoglycan 4-alpha-N-acetylglucosaminyltransferase activity. Heparan sulfate proteoglycans are ubiquitous components of the extracellular matrix and play an important role in tissue homeostasis and signaling. This is Exostosin-2 from Mus musculus (Mouse).